The sequence spans 292 residues: Phosphoribosylglycinamide formyltransferase, chloroplastic (292 aa).

The N-terminal 65 residues, 1 to 65, are a transit peptide targeting the chloroplast; sequence MESRVLFSSQ…KAASSTPQIV (65 aa). A N(1)-(5-phospho-beta-D-ribosyl)glycinamide-binding site is contributed by 88–90; that stretch reads GSN. Residues 167 to 170 and Asn184 contribute to the (6R)-10-formyltetrahydrofolate site; that span reads LKLI. Residue His186 is the Proton donor of the active site. Asp227 contacts (6R)-10-formyltetrahydrofolate. Residue Glu256 participates in N(1)-(5-phospho-beta-D-ribosyl)glycinamide binding.

It belongs to the GART family.

Its subcellular location is the plastid. The protein localises to the chloroplast. The catalysed reaction is N(1)-(5-phospho-beta-D-ribosyl)glycinamide + (6R)-10-formyltetrahydrofolate = N(2)-formyl-N(1)-(5-phospho-beta-D-ribosyl)glycinamide + (6S)-5,6,7,8-tetrahydrofolate + H(+). The protein operates within purine metabolism; IMP biosynthesis via de novo pathway; N(2)-formyl-N(1)-(5-phospho-D-ribosyl)glycinamide from N(1)-(5-phospho-D-ribosyl)glycinamide (10-formyl THF route): step 1/1. This Arabidopsis thaliana (Mouse-ear cress) protein is Phosphoribosylglycinamide formyltransferase, chloroplastic (PUR3).